A 167-amino-acid polypeptide reads, in one-letter code: MSETIIAKKAQIVDTVVEKFNNAVSIVVMDYRGLTVEQVTELRKQLREAGVQMEVVKNTYLRRAADKAGYEGLDDTFTGPTAVAFSNEDVVAPAKIIANFSKSADALEIKGGMIEGKVATLDEINALATLPSRDGLLSMLLSVLQAPVRNVAYAVKAVADSKDEPAA.

This sequence belongs to the universal ribosomal protein uL10 family. As to quaternary structure, part of the ribosomal stalk of the 50S ribosomal subunit. The N-terminus interacts with L11 and the large rRNA to form the base of the stalk. The C-terminus forms an elongated spine to which L12 dimers bind in a sequential fashion forming a multimeric L10(L12)X complex.

Its function is as follows. Forms part of the ribosomal stalk, playing a central role in the interaction of the ribosome with GTP-bound translation factors. In Latilactobacillus sakei subsp. sakei (strain 23K) (Lactobacillus sakei subsp. sakei), this protein is Large ribosomal subunit protein uL10.